A 266-amino-acid chain; its full sequence is MDTFQVIILALIQGLTEFLPISSSAHLILPSQLLGWEDQGLSFDVAVNTGSLLAVVMYFRHELWSMFKAWTDSIITRKQTDESKLSWWIILATIPAVIVGFTAKDFIETYLRNTAVIATTTIVFGLLLWWADRMFRPGFTEFQVGWKKALVIGVAQAMALIPGTSRSGATITAALMLGLSREAAARFSFLMSVPVSLGAAILVTKDLISSGQTIDYQALSLGIIVSFVAAYTCIHLFLKLISRMGMTPFVIYRLALGAILCAFMFA.

8 consecutive transmembrane segments (helical) span residues 1–21 (MDTFQVIILALIQGLTEFLPI), 39–59 (QGLSFDVAVNTGSLLAVVMYF), 87–107 (WWIILATIPAVIVGFTAKDFI), 115–135 (AVIATTTIVFGLLLWWADRMF), 144–164 (VGWKKALVIGVAQAMALIPGT), 183–203 (AAARFSFLMSVPVSLGAAILV), 218–238 (ALSLGIIVSFVAAYTCIHLFL), and 246–266 (MTPFVIYRLALGAILCAFMFA).

Belongs to the UppP family.

It is found in the cell inner membrane. The catalysed reaction is di-trans,octa-cis-undecaprenyl diphosphate + H2O = di-trans,octa-cis-undecaprenyl phosphate + phosphate + H(+). Catalyzes the dephosphorylation of undecaprenyl diphosphate (UPP). Confers resistance to bacitracin. In Shewanella sediminis (strain HAW-EB3), this protein is Undecaprenyl-diphosphatase.